The sequence spans 1179 residues: Integrin alpha-E (1179 aa).

A signal peptide spans 1 to 18 (MWLFHTLLCIASLALLAA). Over 19–1124 (FNVDVARPWL…VFLKDEKYHS (1106 aa)) the chain is Extracellular. 2 FG-GAP repeats span residues 22–79 (DVAR…EILC) and 80–138 (HPVE…PQAQ). An N-linked (GlcNAc...) asparagine glycan is attached at Asn49. Intrachain disulfides connect Cys70-Cys79 and Cys126-Cys159. Positions 145–199 (ENLLDPDARVDTGDCYSNKEGGGEDDVNTARQRRALEKEEEEDKEEEEDEEEEEA) are X-domain (extra domain). The tract at residues 158–200 (DCYSNKEGGGEDDVNTARQRRALEKEEEEDKEEEEDEEEEEAG) is disordered. Acidic residues predominate over residues 182 to 200 (KEEEEDKEEEEDEEEEEAG). Residues 200–389 (GTEIAIILDG…SKLRYNIISM (190 aa)) form the VWFA domain. N-linked (GlcNAc...) asparagine glycans are attached at residues Asn271 and Asn321. The stretch at 390–442 (EGTVGDALHYQLAQIGFSAQILDERQVLLGAVGAFDWSGGALLYDTRSRRGRF) is one FG-GAP 3 repeat. N-linked (GlcNAc...) asparagine glycosylation is present at Asn444. 4 FG-GAP repeats span residues 447–499 (AAAA…GREA), 500–560 (SFLP…DGSF), 563–627 (ARIL…GLSA), and 631–691 (QRIR…FTPS). Positions 522, 524, 526, 530, 586, 588, 590, 594, 654, 656, 658, and 662 each coordinate Ca(2+). Cys706 and Cys762 are joined by a disulfide. N-linked (GlcNAc...) asparagine glycosylation is found at Asn726 and Asn782. A disulfide bond links Cys823 and Cys829. Asn857 carries N-linked (GlcNAc...) asparagine glycosylation. Residues Cys893 and Cys907 are joined by a disulfide bond. Residues Asn934 and Asn954 are each glycosylated (N-linked (GlcNAc...) asparagine). 2 cysteine pairs are disulfide-bonded: Cys1008–Cys1033 and Cys1041–Cys1057. Residues Asn1065 and Asn1096 are each glycosylated (N-linked (GlcNAc...) asparagine). Residues 1125-1147 (LPIIIKGSVGGLLVLIVILVILF) form a helical membrane-spanning segment. At 1148-1179 (KCGFFKRKYQQLNLESIRKAQLKSENLLEEEN) the chain is on the cytoplasmic side. The GFFKR motif signature appears at 1150–1154 (GFFKR).

It belongs to the integrin alpha chain family. In terms of assembly, heterodimer of an alpha and a beta subunit. The alpha subunit is composed of a heavy and a light chains linked by a disulfide bond. Alpha-E associates with beta-7. In terms of tissue distribution, expressed on a subclass of T-lymphocytes known as intra-epithelial lymphocytes which are located between mucosal epithelial cells.

The protein resides in the membrane. Integrin alpha-E/beta-7 is a receptor for E-cadherin. It mediates adhesion of intra-epithelial T-lymphocytes to epithelial cell monolayers. This Homo sapiens (Human) protein is Integrin alpha-E (ITGAE).